Consider the following 397-residue polypeptide: Tryptophan synthase beta chain (397 aa).

K91 is subject to N6-(pyridoxal phosphate)lysine.

This sequence belongs to the TrpB family. As to quaternary structure, tetramer of two alpha and two beta chains. Requires pyridoxal 5'-phosphate as cofactor.

It carries out the reaction (1S,2R)-1-C-(indol-3-yl)glycerol 3-phosphate + L-serine = D-glyceraldehyde 3-phosphate + L-tryptophan + H2O. It participates in amino-acid biosynthesis; L-tryptophan biosynthesis; L-tryptophan from chorismate: step 5/5. Functionally, the beta subunit is responsible for the synthesis of L-tryptophan from indole and L-serine. This is Tryptophan synthase beta chain from Bacillus cereus (strain ZK / E33L).